A 737-amino-acid polypeptide reads, in one-letter code: 1,4-alpha-glucan branching enzyme GlgB (737 aa).

D419 acts as the Nucleophile in catalysis. E472 (proton donor) is an active-site residue.

This sequence belongs to the glycosyl hydrolase 13 family. GlgB subfamily. Monomer.

The catalysed reaction is Transfers a segment of a (1-&gt;4)-alpha-D-glucan chain to a primary hydroxy group in a similar glucan chain.. The protein operates within glycan biosynthesis; glycogen biosynthesis. Its function is as follows. Catalyzes the formation of the alpha-1,6-glucosidic linkages in glycogen by scission of a 1,4-alpha-linked oligosaccharide from growing alpha-1,4-glucan chains and the subsequent attachment of the oligosaccharide to the alpha-1,6 position. The protein is 1,4-alpha-glucan branching enzyme GlgB of Mesorhizobium japonicum (strain LMG 29417 / CECT 9101 / MAFF 303099) (Mesorhizobium loti (strain MAFF 303099)).